The following is a 760-amino-acid chain: Probable ubiquitin carboxyl-terminal hydrolase creB (760 aa).

Positions 1–28 are disordered; it reads MGSFLRSFRNNAGSTTPSVGAVPAKKEV. A compositionally biased stretch (polar residues) spans 8–18; the sequence is FRNNAGSTTPS. Residues 55 to 469 enclose the USP domain; it reads YGMENYGNTC…CAYVLFYQET (415 aa). Residue cysteine 64 is the Nucleophile of the active site. Disordered regions lie at residues 114 to 146 and 242 to 270; these read AEAQAEKQRAANAQRPGMPPAQPQKPEDKDSPD and PAAIEKSLPAPDHAETVDQSASSGSKTPN. Polar residues predominate over residues 258–270; sequence VDQSASSGSKTPN. Catalysis depends on histidine 420, which acts as the Proton acceptor. The interval 520–760 is disordered; the sequence is EEHNRPNGLK…LRKKSFSILS (241 aa). Positions 575–635 form a coiled coil; that stretch reads KSDVQGKKER…AALEASKASK (61 aa). 3 stretches are compositionally biased toward basic and acidic residues: residues 578–626, 635–651, and 708–742; these read VQGK…ELKA, KAQEDRRQSPDHGKDKL, and DPKDDPFQDSHHPNKPMMKEDEQANHKDPKHERTG. The segment covering 743 to 760 has biased composition (basic residues); that stretch reads HGKWRSFSLRKKSFSILS.

This sequence belongs to the peptidase C19 family. In terms of assembly, interacts with creA, creC and qutD.

The enzyme catalyses Thiol-dependent hydrolysis of ester, thioester, amide, peptide and isopeptide bonds formed by the C-terminal Gly of ubiquitin (a 76-residue protein attached to proteins as an intracellular targeting signal).. Its function is as follows. Ubiquitin thioesterase component of the regulatory network controlling carbon source utilization through ubiquitination and deubiquitination involving creA, creB, creC, creD and acrB. Deubiquitinates the creA catabolic repressor and the quinate permease qutD. Also plays a role in response to carbon starvation and the control of extracellular proteases activity. This is Probable ubiquitin carboxyl-terminal hydrolase creB (creB) from Aspergillus clavatus (strain ATCC 1007 / CBS 513.65 / DSM 816 / NCTC 3887 / NRRL 1 / QM 1276 / 107).